We begin with the raw amino-acid sequence, 237 residues long: Cytosolic-abundant heat soluble protein 1 (237 aa).

Composition is skewed to basic and acidic residues over residues 1–17 (MPYE…KTEQ) and 91–105 (VDMR…EARR). Disordered stretches follow at residues 1-35 (MPYE…VARE) and 85-105 (SGAS…EARR). Positions 98 to 201 (KLAEEARRDA…KEALERSRMA (104 aa)) form a coiled coil. CAHS motif stretches follow at residues 132–150 (YRHQ…LEKQ) and 169–187 (QKRE…LDRE). The segment at 212 to 237 (AGHTVSGGTTVSSVDKVETVRERKHH) is disordered. Residues 226-237 (DKVETVRERKHH) show a composition bias toward basic and acidic residues.

The protein belongs to the Cytosolic-abundant heat soluble protein (CAHS) family.

Its subcellular location is the cytoplasm. It localises to the nucleus. CAHS proteins are cytosolic heat soluble proteins that seem to contribute to the anhydrobiosis in tardigrades, but their specific mechanisms are yet to be identified. It is possible that protection during anhydrobiosis might occur via the stabilization of vitrifying small molecules such as sugars, but not via the direct glass transition of CAHS proteins themselves. This Ramazzottius varieornatus (Water bear) protein is Cytosolic-abundant heat soluble protein 1.